Consider the following 291-residue polypeptide: ATP synthase gamma chain (291 aa).

This sequence belongs to the ATPase gamma chain family. In terms of assembly, F-type ATPases have 2 components, CF(1) - the catalytic core - and CF(0) - the membrane proton channel. CF(1) has five subunits: alpha(3), beta(3), gamma(1), delta(1), epsilon(1). CF(0) has three main subunits: a, b and c.

It is found in the cell inner membrane. Functionally, produces ATP from ADP in the presence of a proton gradient across the membrane. The gamma chain is believed to be important in regulating ATPase activity and the flow of protons through the CF(0) complex. The chain is ATP synthase gamma chain from Aquifex aeolicus (strain VF5).